We begin with the raw amino-acid sequence, 43 residues long: Probable intron-encoded DNA endonuclease 2 (43 aa).

It belongs to the LAGLIDADG endonuclease family.

It localises to the mitochondrion. Mitochondrial DNA endonuclease involved in intron homing. This is Probable intron-encoded DNA endonuclease 2 (hegI2) from Mycosarcoma maydis (Corn smut fungus).